The sequence spans 3147 residues: MEPPNNANTGQLGPTLPNGTVDLPTDLSREITRHFGLEQDEIEEILPCTPFQRDVIECASDDKRRAVGHVVYEIPEDVDTERLAAAWKATVRYTPALRTCIFTSETGNAFQVVLRDCFIFARMYCPSAHLKSAIVKDEATAAVAGPRCNRYVLTGEPNSKRRVLVWTFSHSFVDSAFQGRILQQVLAAYKDEHGRVFSLQPTTDLVESENGDCLSTPASERTVGIERATQFWQEKLHGLDASVFPHLPSHKRVPAIDARADHYLPCPPFIQHEWSSTTVCRTALAILLARYTHSSEALFGVVTEQSHEEHPLLLDGPTSTVVPFRVLCAPNQSVSEVMEAITTYDHDMRQFAHAGLCNISRIGDDASAACGFQTVLMVTDSRTASADEIHHVLEEPEKFIPCTDRALLLSCQMTDEGVLLVARYDQSILEPLQMARFLRQLGFLINKLQSTDGSPCVGQLDVLAPEDRTEIEGWNSEPLQTQDCLIHSEVVKNADDTPNKPAVCAWDGEWTYSELNNVSSRLASYISSLDLGQQLIVPIYLEKSKWVMAAILAVLKAGHAFTLIDPNDPPARTAQIIKQASASIALTSALHQSKMQTVVGRCITVDDDLFQTLTTFEGSQVASAAKPGDLAYVIFTSGSTGDPKGIMIEHRAFYSSVVKFGKALGIRSSTRALQFATHGFGAFLLEVLTTLIHGGCICIPSDHDRMHNIPGFIRQSQINWMMATPSYMTTMKPEDVPGLETLVLVGEQMSSSINDVWLSELQLLDGYGQSESSSICFVGKISDSSRDPNNLGRAIGSHSWIVNPDNPDQLVPIGAIGELLIESPGIARGYLFSQSTETPFLERAPAWYASKQPPYGVKFYRTGDLARYAPDGTVICLGRMDSQVKIRGQRVELDAIENLLRRQFPSDVTVVAEAVKRSDLPSSVVITGFLISSEYVVGAPSTEDTYILDQAVTQEINAKMRQILPAHSIPSFYICMKSLPRTATGKVDRRKLRSIGSSLLALQAQSTAPRSSQAPDASAGVTKLEEVWMDIFNLTPNSHNIGGNFFALGGDSITAIKMVNMARAAGIQLKVSDIFQNPTLASLQAAIGGSSMTVTSIPALALDGPVEQSYSQGRLWFLDQLEIGANWYTIPYAVRLRGPLDVDALNRALLALEKRHETLRTTFEDQDGVGVQIIHETLLDQLRIINADHADYVQLLKQEQTAPFNLASESGWRVSLIRLDDDDNILSIVMHHIISDGWSIDVLRRELGQLYAAALHGADLFGSALSPLPIQYRDFSVWQKQDAQVAEHERQLQYWQKQLADCSPAKLPTDFHRPALLSGKATTVPVTITSELYYRLQEFCSTFNTTSFVVLLATFRAAHYRLTGVDDAVIGTPIANRNRHELENLIGFFVNTQCMRITINEDEETFESLVRQVRSTTTAAFEHEDVPFERVVSAMLPGSRDLSQNPLAQLVFAIHSHKDLGKFELEALESEPLQNEVYTRFDAEFHFFQAPDGLTGYINFATELFKVETIQNVVSVFLQILRHGLEHPQTLISVVPLTDGLAELRSMGLLEIKKVEYPRDSSVVDVFATQVASYPDTLAVVDSSSRLTYAELDHQSDLLATWLRQQNLPTEALVVVLAPRSCETIITFLGILKANLAYLPLDIRSPITRMRDVLSTLPGRTIALLCSDEVAPDFQLPSIELVRIADALEEAAGMTSLNGHEHVPVPSPSPTSLAYVLYTSGSTGRPKGVMIEHRAIVRLARSDIIPDYRPACGDTMAHMFNTAFDGATYEIYTMLLNGGTLVCVDYMDTLSPKSLEAVFKKEQVNATIMAPALLKLYLADARDALKGLDVLISGGDRFDPQDAVDAQSLVRGSCYNGYGPTENGVFSTVYKVDKNDPFVNGVPLGRAVNNSGAYVVDRNQQLVGPGIIGELVVTGDGLARGYTERAFDQNRFIQLKIEGQSVRGYRTGDRVRYRVGEGLIEFFGRMDFQFKIRSNRIEAGEVEAAILSHPAVRNAAVILHVQEKLEPEIVGFVVAEHDDTAEQEEAGDQVEGWQAFFESTTYTELDTVSSSEIGKDFKGWTSMYDGNEIDKAEMQEWLDDTIHTLTDGQALGHVLEIGTGSGMVLFNLGSGLQSFVGLEPSKSAAAFVNNAIKSTPALAGKAHVFVGTATDTNKLDDLHPDLVIFNSVLQYFPTRDYLEQVVDALVHLRSAKRIFFGDVRSYATNRHFLAARAIYTLGNHTTKDEVRKKMAEMEEREEEFLVEPAFFTTLVNRLPDVRHVEIIPKNMQATNELSAYRYAAVVHLRGPDELTRPVHLIKMDDWVDFQASHMHKDALREYLRLAENTKTVAISNIPYGKTIFERQVVESLDDTSEDAPHASLDGAAWISAVRSDAKARSSLSVPDLVLLAKETGFRVEVSAARQWSQSGALDAVFHRYHPAEPDVRTLFQFPTDNDVRMSALLTNQPLQRLQKRRVAVQVREWLQDRIPSYMIPSHIVALDQMPLNTSGKVDRKELSRQAKAIKKVQKSAPPTAPAFPLSEVEVMLCEELTKTFEMDVNITDDFFQLGGHSLLATRLVARISHRLGARLTVKDVFDYPVFSELADIIRQQLASKNTLLPTASAGGGGQDKKESAGVAPTTDMEAMLCEEFANILGMDVGITDNFFDLGGHSLMATRLAARIGHRLNTTISVKDIFSHPVIFQLSAKLEVSQLESSSGGTDIKMPDYTAFQLIPAADAEKFMQDHIYPQINFSQDMVQDVYLATHLQQCFLRDVFGRPKPLVPFYVEFPPDSNPHTLATACTSLVDKYDIFRTIFVEAEGNLYQVVLKHLNLDIDVVETDANVHKTSSDLVDAIAKEPVRLGQPMIQVKVLKQTSSVRVLLWLSHALYDGLSWEHIVRDLHILSKERSLPPATQFSRYMQYVDHTRGPGCDFWRDVLQNAPITNLSDAGSGGRPTKAGDPRVWHAGKVISGPSQAIRSSITQATVFNAACAIVLSKETGTDNVVFGRIVSGRQGLPVRWQNIIGPCTNAVPVRAVVDAHGNHQQMLRDLQEQYLLSLPYETIGFDEIKRSCTDWPDSARNYGCCVTYQNFEYHPESEVDQQRVEMGILAKKAELIKEEPLYNVAIAGEVEPDGVHLQVTVVVDSQLFSQEGATHLMEQVCNTFQALNASL.

Residues 1–12 show a composition bias toward polar residues; the sequence is MEPPNNANTGQL. The interval 1 to 23 is disordered; the sequence is MEPPNNANTGQLGPTLPNGTVDL. The tract at residues 69–454 is condensation 1; the sequence is HVVYEIPEDV…INKLQSTDGS (386 aa). The tract at residues 495–887 is adenylation 1; sequence DDTPNKPAVC…GRMDSQVKIR (393 aa). The Carrier 1 domain maps to 1015–1091; it reads PDASAGVTKL…SLQAAIGGSS (77 aa). S1052 bears the O-(pantetheine 4'-phosphoryl)serine mark. A condensation 2 region spans residues 1109 to 1538; the sequence is SYSQGRLWFL…QTLISVVPLT (430 aa). The segment at 1567–1973 is adenylation 2; sequence FATQVASYPD…GRMDFQFKIR (407 aa). The segment at 2041-2181 is S-adenosyl-L-methionine-dependent N-methyltransferase (MT); that stretch reads TYTELDTVSS…FPTRDYLEQV (141 aa). Carrier domains are found at residues 2515-2589 and 2615-2689; these read FPLS…RQQL and APTT…EVSQ. 2 positions are modified to O-(pantetheine 4'-phosphoryl)serine: S2549 and S2649. The condensation 3 stretch occupies residues 2735–3139; it reads QDVYLATHLQ…THLMEQVCNT (405 aa).

Belongs to the NRP synthetase family.

Bassianolide nonribosomal synthetase that mediates the biosynthesis of bassianolide (BSL), a non-ribosomal cyclodepsipeptide that shows insecticidal and cancer cell antiproliferative activity. BSLS first catalyzes the iterative synthesis of an enzyme-bound dipeptidol monomer intermediate from D-2-hydroxyisovalerate and L-leucine before performing the condensation and cyclization of 4 dipeptidol monomers to yield the cyclic tetrameric ester bassianolide. The N-methyltransferase MT domain is responsible for the methylation of the leucine residues of bassianolide. BSLS is flexible with both the amino acid and hydroxyl acid precursors, and produces bassianolide as the major product (containing N-methyl-L-Leu), together with small amounts of beauvericin and its analogs beauvericins A-C (containing N-methyl-L-Phe). In Beauveria bassiana (strain ARSEF 2860) (White muscardine disease fungus), this protein is Bassianolide nonribosomal cyclodepsipeptide synthetase.